We begin with the raw amino-acid sequence, 119 residues long: Ribosome-binding factor A (119 aa).

Belongs to the RbfA family. As to quaternary structure, monomer. Binds 30S ribosomal subunits, but not 50S ribosomal subunits or 70S ribosomes.

It localises to the cytoplasm. Its function is as follows. One of several proteins that assist in the late maturation steps of the functional core of the 30S ribosomal subunit. Associates with free 30S ribosomal subunits (but not with 30S subunits that are part of 70S ribosomes or polysomes). Required for efficient processing of 16S rRNA. May interact with the 5'-terminal helix region of 16S rRNA. This Buchnera aphidicola subsp. Acyrthosiphon pisum (strain Tuc7) protein is Ribosome-binding factor A.